Reading from the N-terminus, the 260-residue chain is Snake venom serine protease pallabin-2 (260 aa).

Residues 1–18 (MVLIKVLANLLILQLSYA) form the signal peptide. Residues 19-24 (QKSSEL) constitute a propeptide that is removed on maturation. One can recognise a Peptidase S1 domain in the interval 25-251 (IIGGDECNIN…HLDWIENIIA (227 aa)). 6 disulfides stabilise this stretch: C31/C163, C50/C66, C98/C258, C142/C212, C174/C191, and C202/C227. H65 (charge relay system) is an active-site residue. N103 carries N-linked (GlcNAc...) asparagine glycosylation. The active-site Charge relay system is the D110. The active-site Charge relay system is the S206.

The protein belongs to the peptidase S1 family. Snake venom subfamily. As to quaternary structure, monomer. Expressed by the venom gland.

The protein localises to the secreted. Its function is as follows. Snake venom serine protease that may act in the hemostasis system of the prey. The chain is Snake venom serine protease pallabin-2 (JZTHR7) from Gloydius halys (Chinese water mocassin).